The chain runs to 749 residues: Triacylglycerol lipase 5 (749 aa).

An HXXXXD acyltransferase motif motif is present at residues 54 to 59 (HAISYD). In terms of domain architecture, PNPLA spans 183–388 (LVLSGGSTFG…DNDMPISRLS (206 aa)). A GXSXG motif is present at residues 214–218 (GSSAG). The Nucleophile role is filled by Ser-216. N-linked (GlcNAc...) asparagine glycans are attached at residues Asn-270, Asn-289, Asn-297, Asn-304, and Asn-321. Asp-375 acts as the Proton acceptor in catalysis. N-linked (GlcNAc...) asparagine glycans are attached at residues Asn-474 and Asn-589. Positions 585 to 643 (IKSPNKTAAPGRFPLQPLPSPSSTFNKRKMDMLSPSPSPSTSPQRSKSSFTQQGTRQKA) are disordered. A compositionally biased stretch (low complexity) spans 623 to 633 (PSTSPQRSKSS). A compositionally biased stretch (polar residues) spans 634 to 643 (FTQQGTRQKA). Residue Ser-645 is modified to Phosphoserine. N-linked (GlcNAc...) asparagine glycosylation is found at Asn-680, Asn-714, and Asn-742.

Its subcellular location is the lipid droplet. The enzyme catalyses a triacylglycerol + H2O = a diacylglycerol + a fatty acid + H(+). It catalyses the reaction 1-(9Z-octadecenoyl)-sn-glycero-3-phosphate + (9Z)-octadecenoyl-CoA = 1,2-di-(9Z-octadecenoyl)-sn-glycero-3-phosphate + CoA. It carries out the reaction 1-(9Z-octadecenoyl)-sn-glycero-3-phosphate + hexadecanoyl-CoA = 1-hexadecanoyl-2-(9Z-octadecenoyl)-sn-glycero-3-phosphate + CoA. With respect to regulation, loses its lipolytic activity in cells lacking nonpolar lipids, but retains its side activity as lysophospholipid acyltransferase. Functionally, lipid particle-localized triacylglycerol (TAG) lipase. The lipid droplet/particle is a lipid storage compartment which serves as a depot of energy and building blocks for membrane lipid biosynthesis. Involved in the mobilization of the non-polar storage lipids triacylglycerols (TAGs) from lipid particles by hydrolysis of TAGs, releasing and supplying specific fatty acids to the appropriate metabolic pathways. Also catalyzes the acylation of lysophosphatidic acid (LPA). This Saccharomyces cerevisiae (strain ATCC 204508 / S288c) (Baker's yeast) protein is Triacylglycerol lipase 5 (TGL5).